The sequence spans 160 residues: MAPK regulated corepressor interacting protein 2 (160 aa).

Methionine 1 carries the N-acetylmethionine modification. The interval 1-64 (MYTITKGPSK…GPWPLSSPGP (64 aa)) is disordered. Arginine 35 carries the post-translational modification Omega-N-methylarginine. The span at 37 to 61 (PAPPTSQPPRAQPFAQPPGPWPLSS) shows a compositional bias: pro residues. Serine 61 carries the post-translational modification Phosphoserine. An Omega-N-methylarginine modification is found at arginine 65. A Phosphoserine modification is found at serine 82.

This sequence belongs to the MCRIP family. Interacts with DDX6. Interacts with MCRIP1.

The protein resides in the cytoplasm. It localises to the stress granule. The protein localises to the nucleus. The sequence is that of MAPK regulated corepressor interacting protein 2 (MCRIP2) from Homo sapiens (Human).